We begin with the raw amino-acid sequence, 353 residues long: Deoxyribonuclease-2-alpha (353 aa).

The first 19 residues, methionine 1–alanine 19, serve as a signal peptide directing secretion. A disulfide bridge connects residues cysteine 22 and cysteine 161. N-linked (GlcNAc...) asparagine glycans are attached at residues asparagine 71, asparagine 88, asparagine 214, and asparagine 268. 2 disulfides stabilise this stretch: cysteine 269-cysteine 349 and cysteine 310-cysteine 329. The active site involves histidine 297.

This sequence belongs to the DNase II family. Highly expressed in fetal liver macrophages.

The protein resides in the lysosome. It catalyses the reaction Endonucleolytic cleavage to nucleoside 3'-phosphates and 3'-phosphooligonucleotide end-products.. Its function is as follows. Hydrolyzes DNA under acidic conditions with a preference for double-stranded DNA. Plays a major role in the clearance of nucleic acids generated through apoptosis, hence preventing autoinflammation. Necessary for proper fetal development and for definitive erythropoiesis in fetal liver and bone marrow, where it degrades nuclear DNA expelled from erythroid precursor cells. This Mus musculus (Mouse) protein is Deoxyribonuclease-2-alpha (Dnase2).